The sequence spans 302 residues: Probable 5-dehydro-4-deoxyglucarate dehydratase (302 aa).

Belongs to the DapA family.

It catalyses the reaction 5-dehydro-4-deoxy-D-glucarate + H(+) = 2,5-dioxopentanoate + CO2 + H2O. It participates in carbohydrate acid metabolism; D-glucarate degradation; 2,5-dioxopentanoate from D-glucarate: step 2/2. This Rhizobium rhizogenes (strain K84 / ATCC BAA-868) (Agrobacterium radiobacter) protein is Probable 5-dehydro-4-deoxyglucarate dehydratase.